We begin with the raw amino-acid sequence, 430 residues long: Trigger factor (430 aa).

The 86-residue stretch at 157 to 242 folds into the PPIase FKBP-type domain; that stretch reads GDLVALETWS…AVEVSEPVLP (86 aa).

It belongs to the FKBP-type PPIase family. Tig subfamily.

The protein localises to the cytoplasm. It carries out the reaction [protein]-peptidylproline (omega=180) = [protein]-peptidylproline (omega=0). Involved in protein export. Acts as a chaperone by maintaining the newly synthesized protein in an open conformation. Functions as a peptidyl-prolyl cis-trans isomerase. This Xanthomonas campestris pv. campestris (strain ATCC 33913 / DSM 3586 / NCPPB 528 / LMG 568 / P 25) protein is Trigger factor.